The following is a 121-amino-acid chain: MRKNSIKNIRINEEVMRELSNIIRGEIKDPRINPMTSVVAVEVAPDLKTAKAYISVLGDKKSQADTLAGLKSAEGYIRRTLAKNINLRNTPAITFIIDQSIEYGVEMSKKIDEVTKNLKED.

The protein belongs to the RbfA family. As to quaternary structure, monomer. Binds 30S ribosomal subunits, but not 50S ribosomal subunits or 70S ribosomes.

It is found in the cytoplasm. One of several proteins that assist in the late maturation steps of the functional core of the 30S ribosomal subunit. Associates with free 30S ribosomal subunits (but not with 30S subunits that are part of 70S ribosomes or polysomes). Required for efficient processing of 16S rRNA. May interact with the 5'-terminal helix region of 16S rRNA. The chain is Ribosome-binding factor A from Agathobacter rectalis (strain ATCC 33656 / DSM 3377 / JCM 17463 / KCTC 5835 / VPI 0990) (Eubacterium rectale).